Reading from the N-terminus, the 86-residue chain is RNA-binding protein Hfq (86 aa).

One can recognise a Sm domain in the interval 9 to 68; the sequence is DPYLNTLRKEKVGVSIYLVNGIKLQGTIESFDQFVILLKNTVSQMVYKHAISTVVPVRPI.

The protein belongs to the Hfq family. Homohexamer.

In terms of biological role, RNA chaperone that binds small regulatory RNA (sRNAs) and mRNAs to facilitate mRNA translational regulation in response to envelope stress, environmental stress and changes in metabolite concentrations. Also binds with high specificity to tRNAs. The protein is RNA-binding protein Hfq of Pseudomonas fluorescens (strain Pf0-1).